We begin with the raw amino-acid sequence, 705 residues long: MSRSDPDPGKNSEPSKSKMSLELRPTAPSDQGRLNEAFQDEDLEEQNAPGNSTVRSRVVQSGEQGRAKQDDRQITIEQEPLGPKEGTEEESEDERQKGFLERKYDTVCEFCRKHRVILQHTIWAVLLTGFLALVIAACALNFHRALPLFVITLVTIFFVVWDRLMAKYEQRIDDVLSPGKRLLERHWFWLKWVVWCSLILAVILWLALDTARLGQQQLISFGGLVMYIVLLFLFSKHPTRVYWRPVFWGIGLQFLLGLLILRTRPGFVAFDWMGKQVQTFLGYTDAGAQFVFGEKYTDHFFAFKILPIVVFFSTVMSMLYYLGLMQWIIRKVGWLMLVTMGSSPIESVVAAGNIFVGQTESPLLVQPYLPHVTKSELHTIMTAGFATIAGSVLGAYISFGVSSTHLLTASVMSAPAALAVAKLFWPETEKPKITLKNAMKMENGDSRNLLEAATQGASSSIPLVANIAANLIAFLALLSFVNSALSWFGSMFDYPQLSFELICSYIFMPFSFMMGVDWQDRFMVAKLIGYKTFFNEFVAYEHLSKFINLRKAAGPKFVNGVQQYMSIRSETIATYALCGFANFGSLGIVIGGLTSIAPSRKRDIASGAMRALIAGTIACFMTACIAGMLSDTPVAINCHHVLESSKVLSNTTEVASCCQGLFNSTVARGPNDVLPGGNFSLYTLKSCCNLLKPPTLNCGWIPNIP.

Basic and acidic residues predominate over residues 1–21 (MSRSDPDPGKNSEPSKSKMSL). The segment at 1 to 96 (MSRSDPDPGK…TEEESEDERQ (96 aa)) is disordered. Topologically, residues 1–119 (MSRSDPDPGK…FCRKHRVILQ (119 aa)) are cytoplasmic. Residues 48–63 (APGNSTVRSRVVQSGE) are compositionally biased toward polar residues. The segment covering 65-74 (GRAKQDDRQI) has biased composition (basic and acidic residues). Residues 120–140 (HTIWAVLLTGFLALVIAACAL) traverse the membrane as a helical segment. The Extracellular portion of the chain corresponds to 141 to 145 (NFHRA). The helical transmembrane segment at 146 to 166 (LPLFVITLVTIFFVVWDRLMA) threads the bilayer. Topologically, residues 167–190 (KYEQRIDDVLSPGKRLLERHWFWL) are cytoplasmic. A helical transmembrane segment spans residues 191–211 (KWVVWCSLILAVILWLALDTA). Topologically, residues 212–214 (RLG) are extracellular. The helical transmembrane segment at 215–236 (QQQLISFGGLVMYIVLLFLFSK) threads the bilayer. Over 237 to 244 (HPTRVYWR) the chain is Cytoplasmic. The chain crosses the membrane as a helical span at residues 245–264 (PVFWGIGLQFLLGLLILRTR). Topologically, residues 265–301 (PGFVAFDWMGKQVQTFLGYTDAGAQFVFGEKYTDHFF) are extracellular. A helical membrane pass occupies residues 302–322 (AFKILPIVVFFSTVMSMLYYL). Topologically, residues 323–346 (GLMQWIIRKVGWLMLVTMGSSPIE) are cytoplasmic. The helical intramembrane region spans 347-365 (SVVAAGNIFVGQTESPLLV). At 366 to 378 (QPYLPHVTKSELH) the chain is on the cytoplasmic side. The helical transmembrane segment at 379 to 401 (TIMTAGFATIAGSVLGAYISFGV) threads the bilayer. Over 402–403 (SS) the chain is Extracellular. Residues 404–425 (THLLTASVMSAPAALAVAKLFW) form a helical membrane-spanning segment. Residues 426 to 460 (PETEKPKITLKNAMKMENGDSRNLLEAATQGASSS) lie on the Cytoplasmic side of the membrane. Residues 461 to 486 (IPLVANIAANLIAFLALLSFVNSALS) traverse the membrane as a helical segment. Topologically, residues 487-524 (WFGSMFDYPQLSFELICSYIFMPFSFMMGVDWQDRFMV) are extracellular. Positions 525-544 (AKLIGYKTFFNEFVAYEHLS) form an intramembrane region, helical. Topologically, residues 545–583 (KFINLRKAAGPKFVNGVQQYMSIRSETIATYALCGFANF) are extracellular. A helical transmembrane segment spans residues 584-594 (GSLGIVIGGLT). Residues 595–607 (SIAPSRKRDIASG) lie on the Cytoplasmic side of the membrane. A helical transmembrane segment spans residues 608 to 630 (AMRALIAGTIACFMTACIAGMLS). The Extracellular segment spans residues 631–705 (DTPVAINCHH…LNCGWIPNIP (75 aa)).

This sequence belongs to the concentrative nucleoside transporter (CNT) (TC 2.A.41) family. Homotrimer. As to expression, expressed in kidney; in the proximal tubule, glomerulus and cortical collecting duct.

It is found in the cell membrane. It carries out the reaction thymidine(out) + 2 Na(+)(out) = thymidine(in) + 2 Na(+)(in). The enzyme catalyses cytidine(out) + 2 Na(+)(out) = cytidine(in) + 2 Na(+)(in). It catalyses the reaction uridine(out) + 2 Na(+)(out) = uridine(in) + 2 Na(+)(in). The catalysed reaction is adenosine(out) + 2 Na(+)(out) = adenosine(in) + 2 Na(+)(in). It carries out the reaction guanosine(out) + 2 Na(+)(out) = guanosine(in) + 2 Na(+)(in). The enzyme catalyses inosine(out) + 2 Na(+)(out) = inosine(in) + 2 Na(+)(in). In terms of biological role, sodium-dependent, pyrimidine- and purine-selective. Involved in the homeostasis of endogenous nucleosides. Exhibits the transport characteristics of the nucleoside transport system cib or N3 subtype (N3/cib) (with marked transport of both thymidine and inosine). Employs a 2:1 sodium/nucleoside ratio. Also able to transport gemcitabine, 3'-azido-3'-deoxythymidine (AZT), ribavirin and 3-deazauridine. This Rattus norvegicus (Rat) protein is Solute carrier family 28 member 3 (Slc28a3).